The following is a 156-amino-acid chain: Small ribosomal subunit protein uS7 (156 aa).

The protein belongs to the universal ribosomal protein uS7 family. Part of the 30S ribosomal subunit. Contacts proteins S9 and S11.

One of the primary rRNA binding proteins, it binds directly to 16S rRNA where it nucleates assembly of the head domain of the 30S subunit. Is located at the subunit interface close to the decoding center, probably blocks exit of the E-site tRNA. The polypeptide is Small ribosomal subunit protein uS7 (Cellvibrio japonicus (strain Ueda107) (Pseudomonas fluorescens subsp. cellulosa)).